Consider the following 155-residue polypeptide: Small ribosomal subunit protein uS9 (155 aa).

This sequence belongs to the universal ribosomal protein uS9 family.

The sequence is that of Small ribosomal subunit protein uS9 from Rhizobium etli (strain CIAT 652).